The following is a 342-amino-acid chain: S-adenosylmethionine:tRNA ribosyltransferase-isomerase (342 aa).

It belongs to the QueA family. As to quaternary structure, monomer.

The protein resides in the cytoplasm. It carries out the reaction 7-aminomethyl-7-carbaguanosine(34) in tRNA + S-adenosyl-L-methionine = epoxyqueuosine(34) in tRNA + adenine + L-methionine + 2 H(+). Its pathway is tRNA modification; tRNA-queuosine biosynthesis. In terms of biological role, transfers and isomerizes the ribose moiety from AdoMet to the 7-aminomethyl group of 7-deazaguanine (preQ1-tRNA) to give epoxyqueuosine (oQ-tRNA). This is S-adenosylmethionine:tRNA ribosyltransferase-isomerase from Streptococcus pneumoniae (strain ATCC BAA-255 / R6).